We begin with the raw amino-acid sequence, 465 residues long: Ras-like GTPase YcjX (465 aa).

Residues 26-33 (GLSRSGKT) carry the Walker A motif motif. Residues Ser-28, Gly-31, Lys-32, Thr-33, Ala-34, Trp-95, Thr-99, and Arg-100 each contribute to the GTP site. Positions 31, 32, 33, 34, 95, and 99 each coordinate GDP. Position 249 is an N6-acetyllysine (Lys-249). GTP is bound by residues Lys-338, Asp-340, His-341, and Val-380. Positions 338, 340, 341, and 380 each coordinate GDP.

To H.influenzae HI_1637. Monomer in solution. Mg(2+) serves as cofactor.

It carries out the reaction GTP + H2O = GDP + phosphate + H(+). Alternates between an inactive form bound to GDP and an active form bound to GTP. Likely activated by a guanine nucleotide-exchange factor (GEF). Functionally, binds GTP and GDP. Has intrinsic GTPase activity. Does not hydrolyze ATP. May act as a transducer of stress responses. This chain is Ras-like GTPase YcjX (ycjX), found in Escherichia coli (strain K12).